We begin with the raw amino-acid sequence, 134 residues long: S-adenosylmethionine decarboxylase proenzyme (134 aa).

Ser64 acts as the Schiff-base intermediate with substrate; via pyruvic acid in catalysis. A Pyruvic acid (Ser); by autocatalysis modification is found at Ser64. His69 (proton acceptor; for processing activity) is an active-site residue. Cys84 (proton donor; for catalytic activity) is an active-site residue.

The protein belongs to the prokaryotic AdoMetDC family. Type 1 subfamily. As to quaternary structure, heterotetramer of two alpha and two beta chains arranged as a dimer of alpha/beta heterodimers. The cofactor is pyruvate. In terms of processing, is synthesized initially as an inactive proenzyme. Formation of the active enzyme involves a self-maturation process in which the active site pyruvoyl group is generated from an internal serine residue via an autocatalytic post-translational modification. Two non-identical subunits are generated from the proenzyme in this reaction, and the pyruvate is formed at the N-terminus of the alpha chain, which is derived from the carboxyl end of the proenzyme. The post-translation cleavage follows an unusual pathway, termed non-hydrolytic serinolysis, in which the side chain hydroxyl group of the serine supplies its oxygen atom to form the C-terminus of the beta chain, while the remainder of the serine residue undergoes an oxidative deamination to produce ammonia and the pyruvoyl group blocking the N-terminus of the alpha chain.

The enzyme catalyses S-adenosyl-L-methionine + H(+) = S-adenosyl 3-(methylsulfanyl)propylamine + CO2. The protein operates within amine and polyamine biosynthesis; S-adenosylmethioninamine biosynthesis; S-adenosylmethioninamine from S-adenosyl-L-methionine: step 1/1. In terms of biological role, catalyzes the decarboxylation of S-adenosylmethionine to S-adenosylmethioninamine (dcAdoMet), the propylamine donor required for the synthesis of the polyamines spermine and spermidine from the diamine putrescine. This Hydrogenobaculum sp. (strain Y04AAS1) protein is S-adenosylmethionine decarboxylase proenzyme.